We begin with the raw amino-acid sequence, 944 residues long: Ras guanine nucleotide exchange factor O (944 aa).

Residues 16-54 (CGICQNLFKDPNTLIPCGHAFCLDCLTTNASIKNCIQCK) form an RING-type zinc finger. The disordered stretch occupies residues 80 to 102 (NNSNNNSNGENTNNNNNIINNER). The B box-type zinc-finger motif lies at 152-192 (NNIRYCMEHYEHYYAFCNDCQAPVCPSCLLTTHNRHGMIPL). 4 residues coordinate Zn(2+): Cys-157, His-160, Cys-179, and His-184. Coiled coils occupy residues 200-234 (KMKEYRDIVQSFKTKMSQYKDNITLYQKEIELLDS) and 271-303 (ASHMELTDRSSTLENEISEMEKLIGNGTDKFKD). Residues 402–528 (EEFEVKYGSL…LLLNSNENSP (127 aa)) form the N-terminal Ras-GEF domain. Disordered stretches follow at residues 530–562 (ITSSQSLSSQSLYSQTNNNNNNNNNNSNNLQPT), 587–623 (TNNGTCKIQNSPPKNYQQSNYSSIFNGPSSSSSSSPS), and 644–670 (ESPLNSPRNNNNNNNNNSPRSSSFGAS). Residues 590–604 (GTCKIQNSPPKNYQQ) are compositionally biased toward polar residues. Composition is skewed to low complexity over residues 605–623 (SNYSSIFNGPSSSSSSSPS) and 648–670 (NSPRNNNNNNNNNSPRSSSFGAS). The Ras-GEF domain maps to 727 to 944 (DEFEIAKQLT…EYLNVHIDEL (218 aa)).

Promotes the exchange of Ras-bound GDP by GTP. The sequence is that of Ras guanine nucleotide exchange factor O (gefO) from Dictyostelium discoideum (Social amoeba).